We begin with the raw amino-acid sequence, 470 residues long: MAKARAPRRKRASATQLYQTCKASGTCPSDVIPKVEGTTIADQILRWGSMGVFFGGLGIGTGSGTGGRTGYIPLGRPSTTLEPGPPVRPAGAVETVAPSDPSIVSLVEESSVVDVGAPTPTIPSQGGFEIATSSDATPAILDVTSTTTPIRVSITSHDNPIYTEPSLLDPPPPVQMDGRVLVSTSTLQSSTAENIPMDTFIIMQDHIGTTTSTPIPRPPARPRLGLYSRALQQVPVQDPAFLQQPSSLITYDNPVYEGNPDVTLHFEQPTIHNAPDPAFMDIFALHRPALTTRRGVVRYSRVGDRATLHTRSGLQLKPRVHFFQDLSPIAHVPEEIELHPLISANNTSINNGLYSDIYDVYADTDFADTGGFSSSTVSHSSVQTALQTTSIPSQYGNTTVPLTASSPYTPIPTSFRPSSGHTPFVPARPIFPQTPIAVNGGDFYLHPSYTYVRKRRKRFPYFLADGYVAA.

The Nuclear localization signal signature appears at 1-12; it reads MAKARAPRRKRA. Cys21 and Cys27 form a disulfide bridge. Positions 451–459 match the Nuclear localization signal motif; that stretch reads YVRKRRKRF.

This sequence belongs to the papillomaviridae L2 protein family. Interacts with major capsid protein L1. Interacts with E2; this interaction inhibits E2 transcriptional activity but not the DNA replication function E2. Interacts with host GADD45GIP1. Interacts with host HSPA8; this interaction is required for L2 nuclear translocation. Interacts with host importins KPNB2 and KPNB3. Forms a complex with importin alpha2-beta1 heterodimers via interaction with the importin alpha2 adapter. Interacts with host DYNLT1; this interaction is essential for virus intracellular transport during entry. Interacts (via C-terminus) with host retromer subunits VPS35 and VPS29. In terms of processing, highly phosphorylated.

The protein resides in the virion. Its subcellular location is the host nucleus. It localises to the host early endosome. The protein localises to the host Golgi apparatus. Its function is as follows. Minor protein of the capsid that localizes along the inner surface of the virion, within the central cavities beneath the L1 pentamers. Plays a role in capsid stabilization through interaction with the major capsid protein L1. Once the virion enters the host cell, L2 escorts the genomic DNA into the nucleus by promoting escape from the endosomal compartments and traffic through the host Golgi network. Mechanistically, the C-terminus of L2 possesses a cell-penetrating peptide that protudes from the host endosome, interacts with host cytoplasmic retromer cargo and thereby mediates the capsid delivery to the host trans-Golgi network. Plays a role through its interaction with host dynein in the intracellular microtubule-dependent transport of viral capsid toward the nucleus. Mediates the viral genome import into the nucleus through binding to host importins. Once within the nucleus, L2 localizes viral genomes to host PML bodies in order to activate early gene expression for establishment of infection. Later on, promotes late gene expression by interacting with the viral E2 protein and by inhibiting its transcriptional activation functions. During virion assembly, encapsidates the genome by direct interaction with the viral DNA. The chain is Minor capsid protein L2 from Human papillomavirus type 54.